Here is a 247-residue protein sequence, read N- to C-terminus: NCT transcriptional regulatory complex subunit A (247 aa).

A compositionally biased stretch (basic and acidic residues) spans 1–12; sequence MTDQDSTYRPRS. Disordered regions lie at residues 1–31, 48–82, and 212–247; these read MTDQ…SPIY, FFAP…SPDM, and VPDQ…DDSD. Residues 13 to 22 show a composition bias toward polar residues; sequence PDLSTFQSSI.

This sequence belongs to the NC2 alpha/DRAP1 family. As to quaternary structure, forms the NCT transcriptional regulatory complex with nctB and mot1.

It localises to the nucleus. In terms of biological role, part of the NCT transcriptional regulatory complex that acts as a key regulator of ergosterol biosynthesis and the azole exporter cdr1B. The NCT complex binds the promoters of genes linked to azole susceptibility, and especially represses the expression of cdr1B transporter. This is NCT transcriptional regulatory complex subunit A from Aspergillus fumigatus (strain CBS 144.89 / FGSC A1163 / CEA10) (Neosartorya fumigata).